The chain runs to 1737 residues: Myosin-M heavy chain (1737 aa).

In terms of domain architecture, Myosin N-terminal SH3-like spans 4–55 (LEGDIVWVPHTVNGYCRGKIIGYNEKNQVTVRLLELNEEIKINEQLIQNYNQ). Residues 59 to 886 (KDFSDMVEIQ…LYIYLEKKRY (828 aa)) form the Myosin motor domain. 154–161 (GESGSGKT) serves as a coordination point for ATP. Residues 640 to 727 (KSNDNNSNNN…NNNSSNNKKS (88 aa)) form a disordered region. 2 stretches are compositionally biased toward low complexity: residues 641-663 (SNDNNSNNNNSNNNSSSSSSSQS) and 679-724 (NSGS…SSNN). The actin-binding stretch occupies residues 754–761 (YIRCIKPN). IQ domains follow at residues 889–918 (LVDSVLKIQAFFKMIKIRNQYKRNKESSLF) and 912–941 (NKESSLFLQTLIRAQRAKKDFEQLVILENK). Residues 926–1039 (QRAKKDFEQL…KKKNEQNLSL (114 aa)) adopt a coiled-coil conformation. Residues 947–1028 (RKKELERQRK…IEKKRKEEEK (82 aa)) are compositionally biased toward basic and acidic residues. Disordered stretches follow at residues 947–1099 (RKKE…PSTK), 1117–1199 (LHGS…PNFN), 1266–1290 (GINKPIPQRTISSSENSPLSRANSS), and 1304–1364 (SLST…SNED). Over residues 1044 to 1070 (ITNSPSLINTTTTTTTTTTTTTNTSSP) the composition is skewed to low complexity. Positions 1071 to 1081 (PLSPPISPRPS) are enriched in pro residues. Positions 1082–1098 (TPSSTSSSSSTTSSPST) are enriched in low complexity. Over residues 1121–1131 (SHSDKNSKEDN) the composition is skewed to basic and acidic residues. The segment covering 1132-1141 (NSNNNNNGDS) has biased composition (low complexity). Positions 1143 to 1153 (IILSSDSSFGQ) are enriched in polar residues. Residues 1162 to 1171 (PTPPPPPPLK) are compositionally biased toward pro residues. Polar residues-rich tracts occupy residues 1180 to 1198 (GVENNSSPNLWSHRNSPNF) and 1274 to 1288 (RTISSSENSPLSRAN). The span at 1304–1359 (SLSTSTTPSTPTTPKTPTTLSSSSVSTSTSLSSVSSSVSSSSSSSIPTPIIESTPS) shows a compositional bias: low complexity. One can recognise a DH domain in the interval 1389–1572 (FRIKIINELI…SDIVQSINEA (184 aa)). The 112-residue stretch at 1603 to 1714 (TLLMEGTVSA…WFKQIKALIQ (112 aa)) folds into the PH domain.

It belongs to the TRAFAC class myosin-kinesin ATPase superfamily. Myosin family. Monomer.

It localises to the cytoplasm. Myosins are actin-based motor molecules with ATPase activity. Involved in macropinocytosis and remodeling of actin cytoskeleton. The chain is Myosin-M heavy chain (myoM) from Dictyostelium discoideum (Social amoeba).